We begin with the raw amino-acid sequence, 88 residues long: Small ribosomal subunit protein uS19 (88 aa).

It belongs to the universal ribosomal protein uS19 family.

In terms of biological role, protein S19 forms a complex with S13 that binds strongly to the 16S ribosomal RNA. The protein is Small ribosomal subunit protein uS19 (rpsS) of Mycoplasma capricolum subsp. capricolum (strain California kid / ATCC 27343 / NCTC 10154).